The chain runs to 292 residues: Transcription antiterminator LacT (292 aa).

PRD domains lie at 66-170 (NIPI…DDGE) and 172-284 (VFGK…APAQ).

The protein belongs to the transcriptional antiterminator BglG family.

Mediates positive regulation of the lac operon by functioning as an antiterminator factor of transcription. The polypeptide is Transcription antiterminator LacT (lacT) (Lacticaseibacillus casei (Lactobacillus casei)).